Here is a 149-residue protein sequence, read N- to C-terminus: Ribosomal RNA large subunit methyltransferase H (149 aa).

Residues Leu-71, Gly-98, and 117 to 122 (LSKMTL) contribute to the S-adenosyl-L-methionine site.

This sequence belongs to the RNA methyltransferase RlmH family. As to quaternary structure, homodimer.

Its subcellular location is the cytoplasm. The enzyme catalyses pseudouridine(1915) in 23S rRNA + S-adenosyl-L-methionine = N(3)-methylpseudouridine(1915) in 23S rRNA + S-adenosyl-L-homocysteine + H(+). In terms of biological role, specifically methylates the pseudouridine at position 1915 (m3Psi1915) in 23S rRNA. In Campylobacter fetus subsp. fetus (strain 82-40), this protein is Ribosomal RNA large subunit methyltransferase H.